The following is a 355-amino-acid chain: UDP-N-acetylglucosamine--N-acetylmuramyl-(pentapeptide) pyrophosphoryl-undecaprenol N-acetylglucosamine transferase (355 aa).

UDP-N-acetyl-alpha-D-glucosamine contacts are provided by residues 14–16, asparagine 126, arginine 162, serine 190, isoleucine 243, 262–267, and glutamine 287; these read TGG and ALTVSE.

Belongs to the glycosyltransferase 28 family. MurG subfamily.

The protein resides in the cell inner membrane. The enzyme catalyses di-trans,octa-cis-undecaprenyl diphospho-N-acetyl-alpha-D-muramoyl-L-alanyl-D-glutamyl-meso-2,6-diaminopimeloyl-D-alanyl-D-alanine + UDP-N-acetyl-alpha-D-glucosamine = di-trans,octa-cis-undecaprenyl diphospho-[N-acetyl-alpha-D-glucosaminyl-(1-&gt;4)]-N-acetyl-alpha-D-muramoyl-L-alanyl-D-glutamyl-meso-2,6-diaminopimeloyl-D-alanyl-D-alanine + UDP + H(+). The protein operates within cell wall biogenesis; peptidoglycan biosynthesis. Its function is as follows. Cell wall formation. Catalyzes the transfer of a GlcNAc subunit on undecaprenyl-pyrophosphoryl-MurNAc-pentapeptide (lipid intermediate I) to form undecaprenyl-pyrophosphoryl-MurNAc-(pentapeptide)GlcNAc (lipid intermediate II). This chain is UDP-N-acetylglucosamine--N-acetylmuramyl-(pentapeptide) pyrophosphoryl-undecaprenol N-acetylglucosamine transferase, found in Vibrio vulnificus (strain CMCP6).